Consider the following 264-residue polypeptide: Teichoic acids export ATP-binding protein TagH (264 aa).

One can recognise an ABC transporter domain in the interval 5 to 243; that stretch reads VNIKNVTKEY…YEAFLNDFKK (239 aa). 57–64 serves as a coordination point for ATP; that stretch reads GINGSGKS.

Belongs to the ABC transporter superfamily. Teichoic acids exporter (TC 3.A.1.104.1) family. In terms of assembly, the complex is composed of two ATP-binding proteins (TagH) and two transmembrane proteins (TagG).

It localises to the cell membrane. The catalysed reaction is ATP + H2O + teichoic acidSide 1 = ADP + phosphate + teichoic acidSide 2.. In terms of biological role, part of the ABC transporter complex TagGH involved in teichoic acids export. Responsible for energy coupling to the transport system. This chain is Teichoic acids export ATP-binding protein TagH, found in Staphylococcus aureus (strain Mu50 / ATCC 700699).